A 507-amino-acid chain; its full sequence is ATP synthase subunit alpha, chloroplastic (507 aa).

Residue 170–177 (GDRQTGKT) participates in ATP binding.

It belongs to the ATPase alpha/beta chains family. In terms of assembly, F-type ATPases have 2 components, CF(1) - the catalytic core - and CF(0) - the membrane proton channel. CF(1) has five subunits: alpha(3), beta(3), gamma(1), delta(1), epsilon(1). CF(0) has four main subunits: a, b, b' and c.

It localises to the plastid. The protein localises to the chloroplast thylakoid membrane. It catalyses the reaction ATP + H2O + 4 H(+)(in) = ADP + phosphate + 5 H(+)(out). Produces ATP from ADP in the presence of a proton gradient across the membrane. The alpha chain is a regulatory subunit. The polypeptide is ATP synthase subunit alpha, chloroplastic (Buxus microphylla (Littleleaf boxwood)).